A 407-amino-acid chain; its full sequence is MRGVVKELNDDGFGVLGNVLVPFSAPGDEVEILKIEKVKKAKIASKWKLIKSSPLRVGARCKVFGRCGGCSLQHLSYDYQLEFKGERIRRLLGVDVEVIPSPRIFGHRNRIDLAVTVEGIGFRERGKWWKIVDIQECPVFGKTSRKAIERLREFIEEERISVWNVKKDEGFLRYMVLREGKFTGEVMVNLVTKEGKLPDPSKYFDFATSIYWSVNRTKSDVSYGEVESVWGREFITEKLDDVIYLIHPNSFFQTNSYQAVNLVKKVSELVEGERVLDMYSGVGTFGIYLAKRGFKVVGFDSNEFAIEMARKNAKINKVDAVFDVATDREVEVNGFDTVIVDPPRVGLHPKLIKKLNREKPEVIVYVSCNPKTFARDIEKLEYKIDEIVALDMFPHTPHLELVAKLIV.

[4Fe-4S] cluster-binding residues include cysteine 61, cysteine 67, cysteine 70, and cysteine 137. S-adenosyl-L-methionine contacts are provided by residues glutamine 253, tyrosine 279, threonine 284, 300–301 (DS), aspartate 327, and aspartate 341. Cysteine 368 acts as the Nucleophile in catalysis. The active-site Proton acceptor is glutamate 400.

The protein belongs to the class I-like SAM-binding methyltransferase superfamily. RNA M5U methyltransferase family.

It catalyses the reaction uridine(54) in tRNA + S-adenosyl-L-methionine = 5-methyluridine(54) in tRNA + S-adenosyl-L-homocysteine + H(+). In terms of biological role, catalyzes the formation of 5-methyl-uridine at position 54 (m5U54) in tRNA. The sequence is that of tRNA (uracil(54)-C(5))-methyltransferase from Pyrococcus horikoshii (strain ATCC 700860 / DSM 12428 / JCM 9974 / NBRC 100139 / OT-3).